The following is a 189-amino-acid chain: Probable nicotinate-nucleotide adenylyltransferase (189 aa).

The protein belongs to the NadD family.

The catalysed reaction is nicotinate beta-D-ribonucleotide + ATP + H(+) = deamido-NAD(+) + diphosphate. It functions in the pathway cofactor biosynthesis; NAD(+) biosynthesis; deamido-NAD(+) from nicotinate D-ribonucleotide: step 1/1. Its function is as follows. Catalyzes the reversible adenylation of nicotinate mononucleotide (NaMN) to nicotinic acid adenine dinucleotide (NaAD). This is Probable nicotinate-nucleotide adenylyltransferase from Staphylococcus aureus (strain N315).